An 82-amino-acid polypeptide reads, in one-letter code: Large ribosomal subunit protein bL27 (82 aa).

Residues 1–20 form a disordered region; that stretch reads MATKKAGGSSSNGRDSIGKR.

This sequence belongs to the bacterial ribosomal protein bL27 family.

This chain is Large ribosomal subunit protein bL27, found in Neorickettsia sennetsu (strain ATCC VR-367 / Miyayama) (Ehrlichia sennetsu).